The primary structure comprises 1097 residues: UPF0746 protein DDB_G0281095 (1097 aa).

A compositionally biased stretch (basic and acidic residues) spans 1–11 (MVNNNKRKEIE). The interval 1–24 (MVNNNKRKEIENQENDNDDDNDGL) is disordered. The span at 12–22 (NQENDNDDDND) shows a compositional bias: acidic residues. One can recognise an SAP domain in the interval 35–69 (YDSIRSKELQTIAKSLGLPNNGKKQEVYKRIEGYF). Positions 329–521 (FKEIREIHQQ…QLILELNEIQ (193 aa)) form a coiled coil.

Belongs to the UPF0746 family.

This is UPF0746 protein DDB_G0281095 from Dictyostelium discoideum (Social amoeba).